The chain runs to 99 residues: Nucleoid-associated protein EbfC (99 aa).

This sequence belongs to the YbaB/EbfC family. As to quaternary structure, homodimer.

The protein resides in the cytoplasm. It localises to the nucleoid. Binds to DNA and alters its conformation. May be involved in regulation of gene expression, nucleoid organization and DNA protection. This Borrelia turicatae (strain 91E135) protein is Nucleoid-associated protein EbfC.